A 935-amino-acid chain; its full sequence is MHINGGPLASWICCVIGSIHLAHASTRPENGGTSGMQRKKENSVLGMEDTVPLRLIFSNEEDNQTTQGLLSTRVRAGSPQHQDQLTHVAQASFQIDAFGSSFILDVELNHDLLSSDYRERHVTQDGKTVEVKGGEHCYYQGQIRGKAKSFVALSTCNGLHGMFCDGNHTYLIEPGEKYNPNEDYQFHSVYKSKVLEFPLDELPSEFWALNDTSVRLSQQTRSQRKKRQTRRYPRNVEDETKYVELMIVNDHLMYKKHRLSVGHTNSYAKSVVNMADLIYKEQLNTRIVLVAMETWATDNKFSISENPLLTLKEFMKYRRDFIKDKSDAVHLFSGSQLRVAAVVLRILVEWCSLLKGGGVNEFGKPDVMAVTLAQSLAHNLGIFSDKKKLLSGECKCEDTWSGCIMGDIGYYLPSKFSVCNIEEYHEFLNNGGGACLFNKPLKLLDPPECGNGFVETGEECDCGTIAECAMEGEECCKKCTLTQDSECSDGLCCSNCKFNPKEMLCREAVNDCDIPETCTGNTSQCPANIHKLDGYSCESMQGLCFGGRCKTRDRQCKYIWGEKVSAADRYCYEKLNIEGTEKGNCGRNKETWIQCNKQDVLCGYLLCTNISNVPRLGELDGDVTSSSIVNQGKLYNCSGGHVKLDEDTDLGYVEDGTPCGTGMMCLEHRCLPIDSFNFSTCLGSTNKICSGHGVCSNEVRCICDRFWTGEDCSSYLHYDHIKPEGDNRDEGVISTNIIIGAIAGTILVLALVLGITAWGYKNYRRERQIPQGDYVKKPGDADSFYSDLPPGVSSNSASSSKKRSAILSHFQISACSIPHYSISQNISLFCRRSNGLSHSWSERIPDTKHVSDVCENGRPRSNSWQGNVTSSRKKLRGKRFRPRSNSTETLSPAKSPSSSTGSIASSRRYPYPMPPLPDEERKASKQSARLWETSI.

Residues 1–24 (MHINGGPLASWICCVIGSIHLAHA) form the signal peptide. Positions 25-227 (STRPENGGTS…QQTRSQRKKR (203 aa)) are excised as a propeptide. N-linked (GlcNAc...) asparagine glycans are attached at residues N167 and N210. The Extracellular segment spans residues 228-736 (QTRRYPRNVE…NRDEGVISTN (509 aa)). A Peptidase M12B domain is found at 241–440 (KYVELMIVND…GGGACLFNKP (200 aa)). Cystine bridges form between C351–C435, C394–C419, C396–C403, C449–C479, C460–C476, C462–C468, C475–C496, C487–C493, C492–C518, C505–C525, C512–C544, C537–C549, C556–C607, C571–C637, C585–C595, C602–C665, and C659–C670. One can recognise a Disintegrin domain in the interval 446–533 (PPECGNGFVE…QCPANIHKLD (88 aa)). N521 is a glycosylation site (N-linked (GlcNAc...) asparagine). 2 N-linked (GlcNAc...) asparagine glycosylation sites follow: N609 and N636. N-linked (GlcNAc...) asparagine glycosylation occurs at N677. In terms of domain architecture, EGF-like spans 677–713 (NFSTCLGSTNKICSGHGVCSNEVRCICDRFWTGEDCS). 3 disulfide bridges follow: C681–C695, C689–C701, and C703–C712. Residues 737–757 (IIIGAIAGTILVLALVLGITA) form a helical membrane-spanning segment. The Cytoplasmic portion of the chain corresponds to 758 to 935 (WGYKNYRRER…QSARLWETSI (178 aa)). A disordered region spans residues 850–935 (VSDVCENGRP…QSARLWETSI (86 aa)). Residues 859-870 (PRSNSWQGNVTS) are compositionally biased toward polar residues. The span at 871–882 (SRKKLRGKRFRP) shows a compositional bias: basic residues. Residues 891–906 (SPAKSPSSSTGSIASS) show a composition bias toward low complexity.

Post-translationally, the precursor is cleaved by a furin endopeptidase. As to expression, low levels in adult tissues. Not detected in developing embryos.

It localises to the cell membrane. In terms of biological role, probable ligand for integrin in the brain. This is a non catalytic metalloprotease-like protein. This Xenopus laevis (African clawed frog) protein is Disintegrin and metalloproteinase domain-containing protein 22 (adam22).